Consider the following 785-residue polypeptide: Tripartite terminase subunit 1 (785 aa).

The C3H1-type zinc-finger motif lies at 197–225 (CAVCFEELCVTANQGATIARRLADRICNH). 2 disordered regions span residues 433-452 (GGAA…GDRV) and 457-489 (GARG…GDIA). 696–703 (FASVYRCG) contacts ATP.

Belongs to the herpesviridae TRM1 protein family. In terms of assembly, associates with TRM2 and TRM3 to form the tripartite terminase complex. Interacts with portal protein.

It localises to the host nucleus. Its function is as follows. Component of the molecular motor that translocates viral genomic DNA in empty capsid during DNA packaging. Forms a tripartite terminase complex together with TRM2 and TRM3 in the host cytoplasm. Once the complex reaches the host nucleus, it interacts with the capsid portal vertex. This portal forms a ring in which genomic DNA is translocated into the capsid. TRM1 carries an endonuclease activity that plays an important role for the cleavage of concatemeric viral DNA into unit length genomes. The chain is Tripartite terminase subunit 1 from Human herpesvirus 1 (strain 17) (HHV-1).